The following is a 78-amino-acid chain: NAD(P)H-quinone oxidoreductase subunit O (78 aa).

The protein belongs to the complex I NdhO subunit family. NDH-1 can be composed of about 15 different subunits; different subcomplexes with different compositions have been identified which probably have different functions.

The protein localises to the cellular thylakoid membrane. It carries out the reaction a plastoquinone + NADH + (n+1) H(+)(in) = a plastoquinol + NAD(+) + n H(+)(out). The enzyme catalyses a plastoquinone + NADPH + (n+1) H(+)(in) = a plastoquinol + NADP(+) + n H(+)(out). Functionally, NDH-1 shuttles electrons from an unknown electron donor, via FMN and iron-sulfur (Fe-S) centers, to quinones in the respiratory and/or the photosynthetic chain. The immediate electron acceptor for the enzyme in this species is believed to be plastoquinone. Couples the redox reaction to proton translocation, and thus conserves the redox energy in a proton gradient. Cyanobacterial NDH-1 also plays a role in inorganic carbon-concentration. This Prochlorococcus marinus (strain MIT 9301) protein is NAD(P)H-quinone oxidoreductase subunit O.